The sequence spans 303 residues: Heme A synthase (303 aa).

Topologically, residues Met1–Lys8 are cytoplasmic. A helical membrane pass occupies residues Trp9–Thr29. Residues Lys30–Ser67 are Extracellular-facing. A disulfide bridge connects residues Cys37 and Cys44. Glu60 is a catalytic residue. His63 is a heme o binding site. Residues Ala68–Ile88 form a helical membrane-spanning segment. Residues Lys89 to Pro93 lie on the Cytoplasmic side of the membrane. The helical transmembrane segment at Leu94–Ile114 threads the bilayer. Topologically, residues Trp115–His125 are extracellular. A heme o-binding site is contributed by His125. Residues Phe126 to Ile146 traverse the membrane as a helical segment. Residues Asp147 to Arg163 are Cytoplasmic-facing. The chain crosses the membrane as a helical span at residues Leu164 to His184. The Extracellular segment spans residues Ala185–Arg215. His214 is a binding site for heme b. A helical membrane pass occupies residues Ile216 to Tyr236. The Cytoplasmic segment spans residues Pro237–Tyr244. Residues Gly245–Met265 traverse the membrane as a helical segment. The Extracellular portion of the chain corresponds to Thr266–Leu270. A helical membrane pass occupies residues Ile271–Ile291. His276 contributes to the heme b binding site. Residues Met292–Gln303 are Cytoplasmic-facing.

Belongs to the COX15/CtaA family. Type 1 subfamily. In terms of assembly, interacts with CtaB. The cofactor is heme b.

It localises to the cell membrane. It catalyses the reaction Fe(II)-heme o + 2 A + H2O = Fe(II)-heme a + 2 AH2. The protein operates within porphyrin-containing compound metabolism; heme A biosynthesis; heme A from heme O: step 1/1. Its function is as follows. Catalyzes the conversion of heme O to heme A by two successive hydroxylations of the methyl group at C8. The first hydroxylation forms heme I, the second hydroxylation results in an unstable dihydroxymethyl group, which spontaneously dehydrates, resulting in the formyl group of heme A. The sequence is that of Heme A synthase from Staphylococcus aureus (strain bovine RF122 / ET3-1).